A 470-amino-acid polypeptide reads, in one-letter code: Ribosomal protein uS12 methylthiotransferase RimO (470 aa).

Residues 4–120 (TRVYLHTLGC…IARVVSDAQA (117 aa)) enclose the MTTase N-terminal domain. Positions 13, 49, 83, 155, 159, and 162 each coordinate [4Fe-4S] cluster. One can recognise a Radical SAM core domain in the interval 141–371 (SLPSHTAYLK…MALQQEISRE (231 aa)). Positions 374 to 442 (RAMVGRRLEV…EYDLVGHVVA (69 aa)) constitute a TRAM domain. A disordered region spans residues 447-470 (RARRPLPAPAGGETPRRGGLPVVG).

This sequence belongs to the methylthiotransferase family. RimO subfamily. The cofactor is [4Fe-4S] cluster.

The protein resides in the cytoplasm. The catalysed reaction is L-aspartate(89)-[ribosomal protein uS12]-hydrogen + (sulfur carrier)-SH + AH2 + 2 S-adenosyl-L-methionine = 3-methylsulfanyl-L-aspartate(89)-[ribosomal protein uS12]-hydrogen + (sulfur carrier)-H + 5'-deoxyadenosine + L-methionine + A + S-adenosyl-L-homocysteine + 2 H(+). Functionally, catalyzes the methylthiolation of an aspartic acid residue of ribosomal protein uS12. The polypeptide is Ribosomal protein uS12 methylthiotransferase RimO (Anaeromyxobacter sp. (strain Fw109-5)).